The following is a 567-amino-acid chain: Myo-inositol transporter 1 (567 aa).

Residues 1–88 (MSARPAQPNI…KFVWMLVSAA (88 aa)) lie on the Cytoplasmic side of the membrane. Residues 14–42 (IRTSLSGYPSPTHSGSSTPASLEFSDGRL) form a disordered region. Over residues 16–33 (TSLSGYPSPTHSGSSTPA) the composition is skewed to polar residues. Residues 89 to 109 (AISGLLFGYDTAAISGMLVII) form a helical membrane-spanning segment. Topologically, residues 110–123 (KDDLGTILSSWQKE) are extracellular. The chain crosses the membrane as a helical span at residues 124–144 (VITSATTLGALLGGLAAGCVS). Topologically, residues 145–150 (DFTGRR) are cytoplasmic. Residues 151-171 (LVIVFANVAFIGGSICQAACH) traverse the membrane as a helical segment. Residues 172–180 (TVAAMIAGR) lie on the Extracellular side of the membrane. The helical transmembrane segment at 181–201 (FIVGLGVGLASCIVPLYIGEL) threads the bilayer. The Cytoplasmic segment spans residues 202–209 (APTMIRGR). The helical transmembrane segment at 210-230 (LVTINCVAVTLGQVVAYAIGA) threads the bilayer. At 231 to 240 (SFQNVHNGWR) the chain is on the extracellular side. A helical membrane pass occupies residues 241–261 (WIVGLGAMPSFVQLAAIGFLP). Topologically, residues 262 to 343 (ESPRILLLRS…IGCGLQAAQQ (82 aa)) are cytoplasmic. A helical transmembrane segment spans residues 344-364 (LCGFNTLMYYSATIFAMLGFN). N-linked (GlcNAc...) asparagine glycosylation is present at Asn-365. The Extracellular segment spans residues 365–367 (NAT). The helical transmembrane segment at 368 to 388 (AVGLIVATVNVLFTLVALKIV) threads the bilayer. Over 389–397 (DPVGRRRTM) the chain is Cytoplasmic. Residues 398-418 (LFTLPIMILALVFAAIFFYYL) form a helical membrane-spanning segment. Topologically, residues 419-435 (TLSTNGILIEDHDYPRS) are extracellular. The helical transmembrane segment at 436 to 456 (LSILVLLSMLLYVAGYATGLG) threads the bilayer. Residues 457-476 (NIPWQQGELFRLEVRGIGTS) lie on the Cytoplasmic side of the membrane. Residues 477-497 (ICTAVNWSCNMLIAGTFLSLM) traverse the membrane as a helical segment. Topologically, residues 498-503 (DAATPS) are extracellular. A helical transmembrane segment spans residues 504-524 (GAFGIYAGFCVIGWVFCWMLY). The Cytoplasmic segment spans residues 525–567 (PETSGLSLEEVYFVFEEGFGIKKSQQLRKQKLVEAAKLKAIFE).

The protein belongs to the major facilitator superfamily. Sugar transporter (TC 2.A.1.1) family.

The protein localises to the cell membrane. The enzyme catalyses myo-inositol(out) + H(+)(out) = myo-inositol(in) + H(+)(in). Its function is as follows. May function as a transporter or as a sensor for myo-inositol. The chain is Myo-inositol transporter 1 from Cryptococcus neoformans var. grubii serotype A (strain H99 / ATCC 208821 / CBS 10515 / FGSC 9487) (Filobasidiella neoformans var. grubii).